A 382-amino-acid chain; its full sequence is cAMP-dependent protein kinase type I-alpha regulatory subunit (382 aa).

Ala-2 bears the N-acetylalanine mark. Residues 2-136 (ATSSSSSSEE…AALAKAIEKN (135 aa)) are dimerization and phosphorylation. The interval 62 to 96 (TKQLLNQQKSGSRSDSREDEISPPPPMNPVVKGRR) is disordered. The Pseudophosphorylation motif motif lies at 97–101 (RRGAI). 3',5'-cyclic AMP contacts are provided by residues 138-255 (LFAH…SKVS), Glu-203, Arg-212, 256-382 (ILES…SLSV), Glu-327, and Arg-336.

Belongs to the cAMP-dependent kinase regulatory chain family. As to quaternary structure, the inactive form of the enzyme is composed of two regulatory chains and two catalytic chains. Activation by cAMP produces two active catalytic monomers and a regulatory dimer that binds four cAMP molecules. The pseudophosphorylation site binds to the substrate-binding region of the catalytic chain but is not phosphorylated. The physiological significance of phosphorylations by other kinases is unclear.

The protein resides in the cell membrane. The protein is cAMP-dependent protein kinase type I-alpha regulatory subunit (PRKAR1A) of Gallus gallus (Chicken).